A 569-amino-acid polypeptide reads, in one-letter code: Glutamate--tRNA ligase (569 aa).

The 'HIGH' region motif lies at 107 to 117 (PEPNGYPHIGH).

Belongs to the class-I aminoacyl-tRNA synthetase family. Glutamate--tRNA ligase type 2 subfamily.

Its subcellular location is the cytoplasm. It carries out the reaction tRNA(Glu) + L-glutamate + ATP = L-glutamyl-tRNA(Glu) + AMP + diphosphate. Its function is as follows. Catalyzes the attachment of glutamate to tRNA(Glu) in a two-step reaction: glutamate is first activated by ATP to form Glu-AMP and then transferred to the acceptor end of tRNA(Glu). The chain is Glutamate--tRNA ligase from Nitrosopumilus maritimus (strain SCM1).